We begin with the raw amino-acid sequence, 420 residues long: 26S proteasome non-ATPase regulatory subunit 4 (420 aa).

One can recognise a VWFA domain in the interval 1–174 (MSQEATIIAV…TGSHLISVAP (174 aa)). UIM domains follow at residues 210-229 (AEDPDLLYALRVSMEDQRMR), 255-274 (SEEAMLQQALAMSMQMNNTE), and 288-307 (SEEDQIAYALRMSLQQMGEE). Residues 392-420 (RKAINALTKSQSQRGSKKDEKEDEDKQNS) form a disordered region. Residues 407–420 (SKKDEKEDEDKQNS) show a composition bias toward basic and acidic residues.

Belongs to the proteasome subunit S5A family. As to quaternary structure, the 26S proteasome is composed of a core protease, known as the 20S proteasome, capped at one or both ends by the 19S regulatory complex (RC). The RC is composed of at least 18 different subunits in two subcomplexes, the base and the lid, which form the portions proximal and distal to the 20S proteolytic core, respectively.

Functionally, binds and presumably selects ubiquitin-conjugates for destruction. This Schistosoma mansoni (Blood fluke) protein is 26S proteasome non-ATPase regulatory subunit 4.